A 1452-amino-acid chain; its full sequence is ABC multidrug transporter A-1 (1452 aa).

Residues 1 to 20 form a disordered region; that stretch reads MNESHEAGKNSSTNVEEREE. 5 N-linked (GlcNAc...) asparagine glycosylation sites follow: asparagine 2, asparagine 10, asparagine 228, asparagine 287, and asparagine 311. The ABC transporter 1 domain occupies 110 to 363; it reads LKTLSLARIA…FLQMGFVCPD (254 aa). 6 helical membrane-spanning segments follow: residues 474-494, 508-528, 554-574, 583-603, 616-636, and 725-745; these read VTIS…SIFY, ALLF…MLTL, MIMD…VLYF, GAFF…SMFF, VLPF…FAIP, and IGVI…ATDF. The 243-residue stretch at 802-1044 folds into the ABC transporter 2 domain; that stretch reads FQWKDVCFDI…ILIDYFVRNG (243 aa). 838-845 provides a ligand contact to ATP; it reads GVSGAGKT. The next 6 membrane-spanning stretches (helical) occupy residues 1153–1173, 1183–1203, 1223–1243, 1271–1291, 1297–1317, and 1324–1344; these read ALCV…PNTI, IFML…HFVA, FLIA…VLMF, LMIW…IAAF, AGNL…VLAT, and FWIF…MLSV. Asparagine 1350, asparagine 1365, and asparagine 1391 each carry an N-linked (GlcNAc...) asparagine glycan. The helical transmembrane segment at 1418–1438 threads the bilayer; it reads FGLMWVFIVFNIFAACSLYWW.

It belongs to the ABC transporter superfamily. ABCG family. PDR (TC 3.A.1.205) subfamily.

Its subcellular location is the membrane. In terms of biological role, ABC transporter that seems not to be involved in the efflux of toxic substances, at least not the classical compounds such as itraconazole, amphotericin B, voriconazole, posaconazole, ravuconazole, or echinocandins. This is ABC multidrug transporter A-1 from Aspergillus fumigatus (strain ATCC MYA-4609 / CBS 101355 / FGSC A1100 / Af293) (Neosartorya fumigata).